The primary structure comprises 308 residues: Methionyl-tRNA formyltransferase (308 aa).

109-112 (SLLP) serves as a coordination point for (6S)-5,6,7,8-tetrahydrofolate.

This sequence belongs to the Fmt family.

It carries out the reaction L-methionyl-tRNA(fMet) + (6R)-10-formyltetrahydrofolate = N-formyl-L-methionyl-tRNA(fMet) + (6S)-5,6,7,8-tetrahydrofolate + H(+). Its function is as follows. Attaches a formyl group to the free amino group of methionyl-tRNA(fMet). The formyl group appears to play a dual role in the initiator identity of N-formylmethionyl-tRNA by promoting its recognition by IF2 and preventing the misappropriation of this tRNA by the elongation apparatus. The sequence is that of Methionyl-tRNA formyltransferase from Caulobacter vibrioides (strain NA1000 / CB15N) (Caulobacter crescentus).